Reading from the N-terminus, the 238-residue chain is Lactate utilization protein A (238 aa).

The protein belongs to the LutA/YkgE family.

Its function is as follows. Is involved in L-lactate degradation and allows cells to grow with lactate as the sole carbon source. This Bacillus pumilus (strain SAFR-032) protein is Lactate utilization protein A.